Here is a 454-residue protein sequence, read N- to C-terminus: tRNA(Ile)-lysidine synthase (454 aa).

ATP is bound at residue S31–S36.

The protein belongs to the tRNA(Ile)-lysidine synthase family.

The protein localises to the cytoplasm. The catalysed reaction is cytidine(34) in tRNA(Ile2) + L-lysine + ATP = lysidine(34) in tRNA(Ile2) + AMP + diphosphate + H(+). In terms of biological role, ligates lysine onto the cytidine present at position 34 of the AUA codon-specific tRNA(Ile) that contains the anticodon CAU, in an ATP-dependent manner. Cytidine is converted to lysidine, thus changing the amino acid specificity of the tRNA from methionine to isoleucine. In Porphyromonas gingivalis (strain ATCC BAA-308 / W83), this protein is tRNA(Ile)-lysidine synthase.